We begin with the raw amino-acid sequence, 279 residues long: MTDLAAKPGIRTVFIVSDGTGITAETFSHSILAQFEMKFRQVRIPFVDTVDKAHVAVSKINEAFHVEGMKPIVFTTLVDAEANRIVHQARATILDMFQTFIEPLERELGLKSSHAIGRFHQNADTEAYKNRIEAINFSLAHDDGQSHKNLAEADVILVGVSRSGKTPTSLYLAMQYGVKSANYPLIPDDFERGKLPTVLYEYKSKIFGLTIDPQRLSEIRNERRPGSKYAALENCRYEVNEAETLMRRESIKWLSSTHKSIEEIATTILQDIKMERDAY.

159–166 (GVSRSGKT) contacts ADP.

Belongs to the pyruvate, phosphate/water dikinase regulatory protein family. PSRP subfamily.

It carries out the reaction [pyruvate, water dikinase] + ADP = [pyruvate, water dikinase]-phosphate + AMP + H(+). The catalysed reaction is [pyruvate, water dikinase]-phosphate + phosphate + H(+) = [pyruvate, water dikinase] + diphosphate. In terms of biological role, bifunctional serine/threonine kinase and phosphorylase involved in the regulation of the phosphoenolpyruvate synthase (PEPS) by catalyzing its phosphorylation/dephosphorylation. This chain is Putative phosphoenolpyruvate synthase regulatory protein, found in Ralstonia nicotianae (strain ATCC BAA-1114 / GMI1000) (Ralstonia solanacearum).